Reading from the N-terminus, the 402-residue chain is S-adenosylmethionine synthase (402 aa).

His-16 lines the ATP pocket. Position 18 (Asp-18) interacts with Mg(2+). K(+) is bound at residue Glu-44. L-methionine contacts are provided by Glu-57 and Gln-109. A flexible loop region spans residues 109–119 (QSAHIAQGVDA). Residues 174–176 (DTK), Asp-252, 258–259 (RK), Ala-275, and Lys-279 each bind ATP. Position 252 (Asp-252) interacts with L-methionine. Position 283 (Lys-283) interacts with L-methionine.

It belongs to the AdoMet synthase family. In terms of assembly, homotetramer; dimer of dimers. The cofactor is Mg(2+). Requires K(+) as cofactor.

It is found in the cytoplasm. It carries out the reaction L-methionine + ATP + H2O = S-adenosyl-L-methionine + phosphate + diphosphate. It functions in the pathway amino-acid biosynthesis; S-adenosyl-L-methionine biosynthesis; S-adenosyl-L-methionine from L-methionine: step 1/1. Functionally, catalyzes the formation of S-adenosylmethionine (AdoMet) from methionine and ATP. The overall synthetic reaction is composed of two sequential steps, AdoMet formation and the subsequent tripolyphosphate hydrolysis which occurs prior to release of AdoMet from the enzyme. This is S-adenosylmethionine synthase from Rhizorhabdus wittichii (strain DSM 6014 / CCUG 31198 / JCM 15750 / NBRC 105917 / EY 4224 / RW1) (Sphingomonas wittichii).